Reading from the N-terminus, the 158-residue chain is UPF0266 membrane protein YobD (158 aa).

Transmembrane regions (helical) follow at residues 6–26, 45–65, and 67–87; these read LVLI…QFIM, IDSV…VTNH, and ALIT…IFWI.

It belongs to the UPF0266 family.

Its subcellular location is the cell inner membrane. In Shigella boydii serotype 4 (strain Sb227), this protein is UPF0266 membrane protein YobD.